A 527-amino-acid chain; its full sequence is Lysine--tRNA ligase (527 aa).

Residues Glu431 and Glu438 each coordinate Mg(2+).

Belongs to the class-II aminoacyl-tRNA synthetase family. As to quaternary structure, homodimer. Mg(2+) serves as cofactor.

The protein resides in the cytoplasm. The catalysed reaction is tRNA(Lys) + L-lysine + ATP = L-lysyl-tRNA(Lys) + AMP + diphosphate. This chain is Lysine--tRNA ligase (lysS), found in Chlamydia pneumoniae (Chlamydophila pneumoniae).